The sequence spans 430 residues: Adenylosuccinate synthetase (430 aa).

GTP contacts are provided by residues 12–18 (GDEGKGK) and 40–42 (GHT). D13 serves as the catalytic Proton acceptor. Residues D13 and G40 each coordinate Mg(2+). Residues 13–16 (DEGK), 38–41 (NAGH), T128, R142, Q223, T238, and R302 contribute to the IMP site. H41 acts as the Proton donor in catalysis. Residue 298 to 304 (TTTGRPR) coordinates substrate. GTP is bound by residues R304, 330-332 (CID), and 412-414 (SVG).

Belongs to the adenylosuccinate synthetase family. Homodimer. Mg(2+) serves as cofactor.

The protein resides in the cytoplasm. It catalyses the reaction IMP + L-aspartate + GTP = N(6)-(1,2-dicarboxyethyl)-AMP + GDP + phosphate + 2 H(+). The protein operates within purine metabolism; AMP biosynthesis via de novo pathway; AMP from IMP: step 1/2. In terms of biological role, plays an important role in the de novo pathway of purine nucleotide biosynthesis. Catalyzes the first committed step in the biosynthesis of AMP from IMP. The chain is Adenylosuccinate synthetase from Streptococcus thermophilus (strain CNRZ 1066).